Reading from the N-terminus, the 124-residue chain is Probable 5-hydroxyisourate hydrolase (124 aa).

Substrate is bound by residues histidine 16, arginine 57, and tyrosine 121.

It belongs to the transthyretin family. 5-hydroxyisourate hydrolase subfamily. In terms of assembly, homotetramer.

The catalysed reaction is 5-hydroxyisourate + H2O = 5-hydroxy-2-oxo-4-ureido-2,5-dihydro-1H-imidazole-5-carboxylate + H(+). Functionally, catalyzes the hydrolysis of 5-hydroxyisourate (HIU) to 2-oxo-4-hydroxy-4-carboxy-5-ureidoimidazoline (OHCU). This chain is Probable 5-hydroxyisourate hydrolase, found in Schizosaccharomyces pombe (strain 972 / ATCC 24843) (Fission yeast).